Consider the following 556-residue polypeptide: Formate--tetrahydrofolate ligase (556 aa).

65-72 is an ATP binding site; the sequence is TPAGEGKS.

It belongs to the formate--tetrahydrofolate ligase family.

It carries out the reaction (6S)-5,6,7,8-tetrahydrofolate + formate + ATP = (6R)-10-formyltetrahydrofolate + ADP + phosphate. It functions in the pathway one-carbon metabolism; tetrahydrofolate interconversion. The protein is Formate--tetrahydrofolate ligase of Streptococcus equi subsp. zooepidemicus (strain MGCS10565).